Reading from the N-terminus, the 457-residue chain is Methanethiol oxidase (457 aa).

Belongs to the selenium-binding protein family.

It is found in the nucleus. The protein localises to the cytoplasm. Its subcellular location is the cytosol. It localises to the membrane. It catalyses the reaction methanethiol + O2 + H2O = hydrogen sulfide + formaldehyde + H2O2 + H(+). Its pathway is organosulfur degradation. Functionally, catalyzes the oxidation of methanethiol, an organosulfur compound known to be produced in substantial amounts by gut bacteria. Selenium-binding protein which may be involved in the sensing of reactive xenobiotics in the cytoplasm. May be involved in intra-Golgi protein transport. The sequence is that of Methanethiol oxidase (selenbp1) from Danio rerio (Zebrafish).